A 299-amino-acid chain; its full sequence is B-box zinc finger protein 22 (299 aa).

Residues Cys-5, Cys-8, Cys-28, His-33, Cys-57, Cys-60, Cys-80, and His-85 each coordinate Zn(2+). Residues 5-47 form a B box-type 1; atypical zinc finger; the sequence is CNVCEAAEATVLCCADEAALCWACDEKIHAANKLAGKHQRVPL. The segment at 57–99 adopts a B box-type 2; atypical zinc-finger fold; it reads CDICQEASGFFFCLQDRALLCRKCDVAIHTVNPHVSAHQRFLL. Disordered stretches follow at residues 143-181 and 206-299; these read FDHHHHQQQQEQQEGVIPGTKVNDQTSTKLPLVSSGSTT and ENNG…RRRF. Composition is skewed to polar residues over residues 164-181, 251-260, and 277-290; these read VNDQTSTKLPLVSSGSTT, QIQSPPTASG, and ITSSTPYTGSSPNQ.

Interacts with HY5. Post-translationally, ubiquitinated by COP1 in vitro. COP1-mediated degradation of BBX22 by the proteasome occurs in the dark and is important for a precise skotomorphogenesis process and optimization of seedling growth under short days conditions.

The protein resides in the nucleus. Acts as a positive regulator of seedling photomorphogenesis and light-regulated inhibition of hypocotyl elongation, independently and in concert with HY5 and BBX21. Acts as a positive regulator of de-etiolation and influences chloroplast biogenesis and function through regulation of genes encoding chloroplast proteins. Acts downstream of COP1 and plays an important role in early and long-term adjustment of the shade avoidance syndrome (SAS) responses in natural environments. Regulates the expression of genes responsive to light hormone signals which may contribute to optimal seedling development. The sequence is that of B-box zinc finger protein 22 from Arabidopsis thaliana (Mouse-ear cress).